We begin with the raw amino-acid sequence, 434 residues long: F-box/LRR-repeat protein 21 (434 aa).

Residues 39-85 (RLDWGSLPHRVVLCVFQYLPLIDRARASSVCRRWNEVFHIPDLWRKF) form the F-box domain. LRR repeat units follow at residues 140-165 (LVNC…SKSH), 187-213 (DTPV…KMSS), 214-239 (CPHV…ALNY), 242-265 (LSDE…RIDV), 322-347 (GRSV…VVCA), 349-374 (GIQV…GLSE), and 375-400 (CEVS…SIME).

As to quaternary structure, part of the SCF (SKP1-CUL1-F-box) E3 ubiquitin-protein ligase complex SCF(FBXL21) composed of CUL1, SKP1, RBX1 and FBXL21. Interacts with CRY2. Interacts with CRY1. Expressed in the adenohypophysis, hypothalamus (especially in the suprachiasmatic nucleus or nuclei, SCN) and pineal, all neuroendocrine structures associated with timing and homeostasis.

Its subcellular location is the cytoplasm. The protein localises to the cytosol. The protein resides in the nucleus. Its pathway is protein modification; protein ubiquitination. In terms of biological role, substrate-recognition component of the SCF(FBXL21) E3 ubiquitin ligase complex involved in circadian rhythm function. Plays a key role in the maintenance of both the speed and the robustness of the circadian clock oscillation. The SCF(FBXL21) complex mainly acts in the cytosol and mediates ubiquitination of CRY proteins (CRY1 and CRY2), leading to CRY proteins stabilization. The SCF(FBXL21) complex counteracts the activity of the SCF(FBXL3) complex and protects CRY proteins from degradation. Involved in the hypothalamic suprachiasmatic nucleus (SCN) clock regulating temporal organization of the daily activities. This is F-box/LRR-repeat protein 21 (Fbxl21) from Ovis aries (Sheep).